A 336-amino-acid chain; its full sequence is P2Y purinoceptor 13 (336 aa).

Residues 1–32 (MLGTVNTTGMQGFNKSERCPRDTRMTQLLFPV) lie on the Extracellular side of the membrane. 2 N-linked (GlcNAc...) asparagine glycosylation sites follow: asparagine 6 and asparagine 14. The helical transmembrane segment at 33–53 (LYTVVFFTGVLLNTLALWVFI) threads the bilayer. Topologically, residues 54 to 60 (HIPSNST) are cytoplasmic. The chain crosses the membrane as a helical span at residues 61-81 (FIIYLKNTLVADLIMTLMLPF). Topologically, residues 82 to 100 (KILSDSRLAPWQLRGFVCT) are extracellular. A disulfide bond links cysteine 99 and cysteine 176. The chain crosses the membrane as a helical span at residues 101–121 (FSSVVFYETMYVGIMMLGLIA). Residues 122-144 (FDRFLKIVVPFRKTFVKKTAFAK) lie on the Cytoplasmic side of the membrane. A helical transmembrane segment spans residues 145–165 (IVSISIWLLMFLISLPNMILN). At 166–193 (KEATASTVKKCASLKSPLGLLWHQVVSH) the chain is on the extracellular side. A helical membrane pass occupies residues 194–214 (TCQFIFWTVFILMLLFYTVIA). At 215-237 (KKVYDSYRKFKSRDSKHKRLEAK) the chain is on the cytoplasmic side. A helical transmembrane segment spans residues 238-258 (VFIVMAVFFVCFAPFHFVRVP). Topologically, residues 259-281 (YTHSQTTNKTDCRLENQLFLAKE) are extracellular. The N-linked (GlcNAc...) asparagine glycan is linked to asparagine 266. The chain crosses the membrane as a helical span at residues 282–302 (STLFLATTNICMDPLIYIILC). Over 303–336 (KKFTRKVPCMRWRTKTAASSDEHHSSQTDNITLS) the chain is Cytoplasmic.

It belongs to the G-protein coupled receptor 1 family. In terms of tissue distribution, highest levels in spleen, liver brain and kidney. Lower but significant level are also detected in intestine, stomach, skeletal muscle, testis, heart and lung.

Its subcellular location is the cell membrane. In terms of biological role, receptor for ADP. Coupled to G(i)-proteins. May play a role in hematopoiesis and the immune system. The protein is P2Y purinoceptor 13 (P2ry13) of Rattus norvegicus (Rat).